Here is a 134-residue protein sequence, read N- to C-terminus: Transcription antitermination protein NusB (134 aa).

This sequence belongs to the NusB family.

In terms of biological role, involved in transcription antitermination. Required for transcription of ribosomal RNA (rRNA) genes. Binds specifically to the boxA antiterminator sequence of the ribosomal RNA (rrn) operons. The chain is Transcription antitermination protein NusB from Shewanella frigidimarina (strain NCIMB 400).